The following is a 258-amino-acid chain: PF03932 family protein CutC (258 aa).

Belongs to the CutC family.

It localises to the cytoplasm. This chain is PF03932 family protein CutC, found in Mesorhizobium japonicum (strain LMG 29417 / CECT 9101 / MAFF 303099) (Mesorhizobium loti (strain MAFF 303099)).